Consider the following 321-residue polypeptide: UPF0026 protein MJ1312 (321 aa).

The Radical SAM core domain occupies 11 to 236 (RRLGKSLGIN…AIFNEIIGKN (226 aa)). Residues Cys27, Cys31, and Cys34 each contribute to the [4Fe-4S] cluster site.

This sequence belongs to the UPF0026 family. [4Fe-4S] cluster is required as a cofactor.

This chain is UPF0026 protein MJ1312, found in Methanocaldococcus jannaschii (strain ATCC 43067 / DSM 2661 / JAL-1 / JCM 10045 / NBRC 100440) (Methanococcus jannaschii).